A 1858-amino-acid polypeptide reads, in one-letter code: Protein ROS1C (1858 aa).

Residues T347–P356 show a composition bias toward basic and acidic residues. Disordered regions lie at residues T347–F416 and P1288–E1309. Basic residues-rich tracts occupy residues L360–K370 and K394–R404. Positions 1492, 1499, 1502, and 1508 each coordinate [4Fe-4S] cluster.

This sequence belongs to the DNA glycosylase family. DEMETER subfamily. Requires [4Fe-4S] cluster as cofactor. Expressed in pistils and immature seeds. Expressed a low levels in roots, leaves and anthers.

The protein localises to the nucleus. Functionally, bifunctional DNA glycosylase/lyase, which excises 5-methylcytosine (5-meC) and 5-hydroxymethylcytosine (5-hmeC), leaving an apyrimidinic (AP) site that is subsequently incised by the lyase activity. Is responsible for the demethylation of methylated cytosine residues of Tos17 retrotransposon DNA. Demethylation of Tos17 cytosine residues promotes its transposition. May be involved in seed development. This Oryza sativa subsp. japonica (Rice) protein is Protein ROS1C.